We begin with the raw amino-acid sequence, 289 residues long: Formamidopyrimidine-DNA glycosylase 1 (289 aa).

Catalysis depends on Pro-2, which acts as the Schiff-base intermediate with DNA. Glu-3 acts as the Proton donor in catalysis. Lys-61 (proton donor; for beta-elimination activity) is an active-site residue. DNA contacts are provided by His-100, Arg-119, and Lys-165. The FPG-type zinc-finger motif lies at 251-285 (DAYGREGENCRRCGAVIRRERFMNRSSFYCPRCQP). Arg-275 acts as the Proton donor; for delta-elimination activity in catalysis.

Belongs to the FPG family. Monomer. Zn(2+) serves as cofactor.

It catalyses the reaction Hydrolysis of DNA containing ring-opened 7-methylguanine residues, releasing 2,6-diamino-4-hydroxy-5-(N-methyl)formamidopyrimidine.. The catalysed reaction is 2'-deoxyribonucleotide-(2'-deoxyribose 5'-phosphate)-2'-deoxyribonucleotide-DNA = a 3'-end 2'-deoxyribonucleotide-(2,3-dehydro-2,3-deoxyribose 5'-phosphate)-DNA + a 5'-end 5'-phospho-2'-deoxyribonucleoside-DNA + H(+). Its function is as follows. Involved in base excision repair of DNA damaged by oxidation or by mutagenic agents. Acts as a DNA glycosylase that recognizes and removes damaged bases. Has a preference for oxidized purines, such as 7,8-dihydro-8-oxoguanine (8-oxoG) when paired with C, G or T, as well as methyl-faPy (formanidopyrimidine residues) in poly(dG-dC) and spiroiminodihydantoin:C base pairs. Unlike its E.coli ortholog has no activity on 8-oxoG:A. Has AP (apurinic/apyrimidinic) lyase activity and introduces nicks in the DNA strand. Cleaves the DNA backbone by beta-delta elimination to generate a single-strand break at the site of the removed base with both 3'- and 5'-phosphates. Cleaves ssDNA containing an AP site. Complements the H(2)O(2) sensitivity of an M.smegmatis fpg disruption mutant; upon expression in M.smegmatis excises 8-oxoG from dsDNA. The protein is Formamidopyrimidine-DNA glycosylase 1 (fpg1) of Mycobacterium tuberculosis (strain ATCC 25618 / H37Rv).